Consider the following 572-residue polypeptide: Asparagine synthetase [glutamine-hydrolyzing] 1 (572 aa).

The active-site For GATase activity is Cys-2. The 185-residue stretch at 2 to 186 folds into the Glutamine amidotransferase type-2 domain; it reads CGIFAAFRHE…PGHVYDSKTD (185 aa). Residues 49 to 53, 74 to 76, and Asp-97 each bind L-glutamine; these read RLAIV and NGE. Positions 194 to 546 constitute an Asparagine synthetase domain; it reads PDWLDEKRIP…QKTVADTVMR (353 aa). Residue Leu-233 participates in ATP binding. A Phosphoserine modification is found at Ser-265. ATP contacts are provided by residues Ile-292 and 366 to 367; that span reads SG. Residue Ser-509 is modified to Phosphoserine.

The catalysed reaction is L-aspartate + L-glutamine + ATP + H2O = L-asparagine + L-glutamate + AMP + diphosphate + H(+). It functions in the pathway amino-acid biosynthesis; L-asparagine biosynthesis; L-asparagine from L-aspartate (L-Gln route): step 1/1. This chain is Asparagine synthetase [glutamine-hydrolyzing] 1 (ASN1), found in Saccharomyces cerevisiae (strain ATCC 204508 / S288c) (Baker's yeast).